Reading from the N-terminus, the 341-residue chain is Tetraacyldisaccharide 4'-kinase (341 aa).

54 to 61 (TVGGAGKT) is an ATP binding site.

This sequence belongs to the LpxK family.

It catalyses the reaction a lipid A disaccharide + ATP = a lipid IVA + ADP + H(+). It participates in glycolipid biosynthesis; lipid IV(A) biosynthesis; lipid IV(A) from (3R)-3-hydroxytetradecanoyl-[acyl-carrier-protein] and UDP-N-acetyl-alpha-D-glucosamine: step 6/6. Transfers the gamma-phosphate of ATP to the 4'-position of a tetraacyldisaccharide 1-phosphate intermediate (termed DS-1-P) to form tetraacyldisaccharide 1,4'-bis-phosphate (lipid IVA). The protein is Tetraacyldisaccharide 4'-kinase of Brucella melitensis biotype 2 (strain ATCC 23457).